Consider the following 268-residue polypeptide: Lipase 1 (268 aa).

Positions 1 to 29 (MRRFRLVGFLSSLVLAAGAALTGAATAQA) are cleaved as a signal peptide. S44 (nucleophile) is an active-site residue. 3 disulfide bridges follow: C61–C86, C127–C135, and C185–C231. H250 is a catalytic residue.

The protein belongs to the 'GDSL' lipolytic enzyme family. As to quaternary structure, monomer.

It localises to the secreted. It carries out the reaction a triacylglycerol + H2O = a diacylglycerol + a fatty acid + H(+). Its activity is regulated as follows. Strongly inhibited by Ag(+). The cations Ca(2+), Mg(2+), Co(2+) and Cu(2+) do not significantly reduce the lipolytic activity of SCO1725. Is also inhibited by DTT in vitro, but not by EDTA or by the reagent masking SH-groups, p-hydroxymercuribenzoate (pHMB). Is resistant to PMSF inhibition, except in the presence of Ca(2+). Is also strongly inhibited by 3,4-dichloroisocoumarin (DCI), another inhibitor of serine hydrolases. Addition of tetrahydrofuran and 1,4-dioxane significantly increases (2- and 4- fold, respectively) hydrolytic activity of lipase towards p-nitrophenyl caprylate. Its function is as follows. Catalyzes the hydrolysis of fatty acid esters with a preference for mid-length acyl chain (C10-C16). Is able to hydrolyze the triacylglycerol triolein and mixed triacylglycerols from a wide range of natural oils; better activity is obtained with corn-, wheat germ- and olive oil that have higher content of linoleic and/or oleic acid (C18:2; C18:1, cis). Tween detergents are also substrates for this enzyme. Displays arylesterase activity towards p-nitrophenyl alkanoate esters and alpha- and beta-naphthyl esters. This Streptomyces coelicolor (strain ATCC BAA-471 / A3(2) / M145) protein is Lipase 1.